A 331-amino-acid polypeptide reads, in one-letter code: Junctional sarcoplasmic reticulum protein 1 (331 aa).

Disordered regions lie at residues 1-118 (MSMT…EELP) and 157-331 (RVPE…KGRD). The interval 3–76 (MTTRAWEELD…EKEPAARGTP (74 aa)) is mediates interaction with CACNA1S. 2 stretches are compositionally biased toward basic and acidic residues: residues 21–35 (LEDH…EDRA) and 61–71 (TRPKKMEKEPA). 2 stretches are compositionally biased toward pro residues: residues 103-112 (PLQPPPPPPA) and 161-175 (PWVP…PSSP). Basic and acidic residues-rich tracts occupy residues 222 to 242 (AVRE…PRRE) and 250 to 302 (PRKE…EPRK). Residues 320–331 (SRQKLRAGKGRD) show a composition bias toward basic residues.

In terms of assembly, interacts with CACNA1S, CACNB1 and calsequestrin.

The protein resides in the sarcoplasmic reticulum membrane. Its subcellular location is the endoplasmic reticulum membrane. Functionally, involved in skeletal muscle excitation/contraction coupling (EC), probably acting as a regulator of the voltage-sensitive calcium channel CACNA1S. EC is a physiological process whereby an electrical signal (depolarization of the plasma membrane) is converted into a chemical signal, a calcium gradient, by the opening of ryanodine receptor calcium release channels. May regulate CACNA1S membrane targeting and activity. This chain is Junctional sarcoplasmic reticulum protein 1 (JSRP1), found in Homo sapiens (Human).